Here is a 178-residue protein sequence, read N- to C-terminus: ATP synthase subunit b (178 aa).

A helical membrane pass occupies residues 11–31 (IIPEPVEIVVGLVAFLLLLFV).

Belongs to the ATPase B chain family. As to quaternary structure, F-type ATPases have 2 components, F(1) - the catalytic core - and F(0) - the membrane proton channel. F(1) has five subunits: alpha(3), beta(3), gamma(1), delta(1), epsilon(1). F(0) has three main subunits: a(1), b(2) and c(10-14). The alpha and beta chains form an alternating ring which encloses part of the gamma chain. F(1) is attached to F(0) by a central stalk formed by the gamma and epsilon chains, while a peripheral stalk is formed by the delta and b chains.

Its subcellular location is the cell membrane. Its function is as follows. F(1)F(0) ATP synthase produces ATP from ADP in the presence of a proton or sodium gradient. F-type ATPases consist of two structural domains, F(1) containing the extramembraneous catalytic core and F(0) containing the membrane proton channel, linked together by a central stalk and a peripheral stalk. During catalysis, ATP synthesis in the catalytic domain of F(1) is coupled via a rotary mechanism of the central stalk subunits to proton translocation. Functionally, component of the F(0) channel, it forms part of the peripheral stalk, linking F(1) to F(0). The protein is ATP synthase subunit b of Saccharopolyspora erythraea (strain ATCC 11635 / DSM 40517 / JCM 4748 / NBRC 13426 / NCIMB 8594 / NRRL 2338).